Consider the following 400-residue polypeptide: Endoglucanase A (400 aa).

Residues 1–32 (MTKTFKKFSIAGLALLFMATAAFAGWSTKASA) form the signal peptide. The Proton donor role is filled by Glu187. Glu328 acts as the Nucleophile in catalysis.

Belongs to the glycosyl hydrolase 5 (cellulase A) family.

The protein resides in the secreted. It catalyses the reaction Endohydrolysis of (1-&gt;4)-beta-D-glucosidic linkages in cellulose, lichenin and cereal beta-D-glucans.. With respect to regulation, strongly inhibited by Hg(2+), Ag(+) and Fe(3+). To a lesser extent, is also inhibited by Pb(2+), Mn(2+), Sn(2+) and Cu(2+). By contrast, Ni(2+), Zn(2+), Co(2+), Ba(2+) and NH(4)(+) do not affect enzyme activity, while 10 mM Ca(2+), and Mg(2+) produce a stimulating effect. Is also strongly inhibited by chemicals such as N-bromosuccinimide and dimethyl(2-dihydroxy-5-nitrobenzyl)sulphonium bromide. Is not affected by N-acetylimidazole. Functionally, endoglucanase with high activity on carboxymethylcellulose (CMC) and lichenan, but not active on Avicel. The sequence is that of Endoglucanase A (celA) from Paenibacillus barcinonensis.